We begin with the raw amino-acid sequence, 191 residues long: MGKEEKNNIEDKALDNEQEMDQESTSKAVEELSIEEQLERARDTIKELEETCDSFKDEALRARAEMENVRKRAERDVSNARKFGIEKFAKELLPVIDSIEQALKHEVKLEEAIAMKEGIELTSKMLVDTLKKNGLEELDPKGEKFDPNLHEAMAMIPNSEFEDNTIFDVFQKGYMLNGRVVRAAKVVIVKN.

Residues 1–15 (MGKEEKNNIEDKALD) show a composition bias toward basic and acidic residues. The disordered stretch occupies residues 1 to 35 (MGKEEKNNIEDKALDNEQEMDQESTSKAVEELSIE).

The protein belongs to the GrpE family. In terms of assembly, homodimer.

It is found in the cytoplasm. Its function is as follows. Participates actively in the response to hyperosmotic and heat shock by preventing the aggregation of stress-denatured proteins, in association with DnaK and GrpE. It is the nucleotide exchange factor for DnaK and may function as a thermosensor. Unfolded proteins bind initially to DnaJ; upon interaction with the DnaJ-bound protein, DnaK hydrolyzes its bound ATP, resulting in the formation of a stable complex. GrpE releases ADP from DnaK; ATP binding to DnaK triggers the release of the substrate protein, thus completing the reaction cycle. Several rounds of ATP-dependent interactions between DnaJ, DnaK and GrpE are required for fully efficient folding. This is Protein GrpE from Francisella philomiragia subsp. philomiragia (strain ATCC 25017 / CCUG 19701 / FSC 153 / O#319-036).